Consider the following 276-residue polypeptide: Protein FAM151B (276 aa).

It belongs to the menorin family.

Functionally, essential for survival of retinal photoreceptor cells. The sequence is that of Protein FAM151B (FAM151B) from Homo sapiens (Human).